Reading from the N-terminus, the 196-residue chain is MRVKGTNVTRIRRKKMIKLAKGYRGQRHINFKVAKQQVWKSYLYAYRDRKNVKRDYRKLWIARINAASRKNGISYSQLMHGFKVAGIDLNRKMLAELAVSDFATFSKLAETAKKQVSAPTRKAATLDTDIKIERIEKGAAKPVVLEPGKSTKTQEVAVAEKPTTASTVAEIKAYLDSESIKYPSSAKKADLLALVK.

This sequence belongs to the bacterial ribosomal protein bL20 family.

Binds directly to 23S ribosomal RNA and is necessary for the in vitro assembly process of the 50S ribosomal subunit. It is not involved in the protein synthesizing functions of that subunit. The polypeptide is Large ribosomal subunit protein bL20 (rplT) (Oenococcus oeni (strain ATCC BAA-331 / PSU-1)).